The following is a 62-amino-acid chain: DNA-directed RNA polymerase subunit Rpo10 (62 aa).

Zn(2+) contacts are provided by cysteine 6, cysteine 9, cysteine 43, and cysteine 44.

This sequence belongs to the archaeal Rpo10/eukaryotic RPB10 RNA polymerase subunit family. Part of the RNA polymerase complex. The cofactor is Zn(2+).

It localises to the cytoplasm. The catalysed reaction is RNA(n) + a ribonucleoside 5'-triphosphate = RNA(n+1) + diphosphate. DNA-dependent RNA polymerase (RNAP) catalyzes the transcription of DNA into RNA using the four ribonucleoside triphosphates as substrates. In Methanoregula boonei (strain DSM 21154 / JCM 14090 / 6A8), this protein is DNA-directed RNA polymerase subunit Rpo10.